The following is a 142-amino-acid chain: Metallothiol transferase FosB (142 aa).

The VOC domain maps to 5–120; that stretch reads NVNHICFSVS…DGHKIELHTG (116 aa). The Mg(2+) site is built by His8, His67, and Glu116. Glu116 serves as the catalytic Proton donor/acceptor.

It belongs to the fosfomycin resistance protein family. FosB subfamily. In terms of assembly, homodimer. Requires Mg(2+) as cofactor.

The protein resides in the cytoplasm. In terms of biological role, metallothiol transferase which confers resistance to fosfomycin by catalyzing the addition of a thiol cofactor to fosfomycin. L-cysteine is probably the physiological thiol donor. In Staphylococcus epidermidis (strain ATCC 35984 / DSM 28319 / BCRC 17069 / CCUG 31568 / BM 3577 / RP62A), this protein is Metallothiol transferase FosB.